The sequence spans 266 residues: Dihydropteroate synthase (266 aa).

In terms of domain architecture, Pterin-binding spans 12–260; sequence AAIMGILNVT…DVKANQEIVA (249 aa). Asn19 is a binding site for Mg(2+). (7,8-dihydropterin-6-yl)methyl diphosphate contacts are provided by residues Thr59, Asp93, Asn112, Asp176, Lys212, and 248–250; that span reads RVH.

This sequence belongs to the DHPS family. In terms of assembly, homodimer or homotrimer. The cofactor is Mg(2+).

The catalysed reaction is (7,8-dihydropterin-6-yl)methyl diphosphate + 4-aminobenzoate = 7,8-dihydropteroate + diphosphate. The protein operates within cofactor biosynthesis; tetrahydrofolate biosynthesis; 7,8-dihydrofolate from 2-amino-4-hydroxy-6-hydroxymethyl-7,8-dihydropteridine diphosphate and 4-aminobenzoate: step 1/2. Functionally, catalyzes the condensation of para-aminobenzoate (pABA) with 6-hydroxymethyl-7,8-dihydropterin diphosphate (DHPt-PP) to form 7,8-dihydropteroate (H2Pte), the immediate precursor of folate derivatives. This chain is Dihydropteroate synthase (folP), found in Streptococcus pyogenes.